The following is a 134-amino-acid chain: MEFKKVAKETAITLQSYLTYQAVRLISQQLSETNPGQAIWLGEFSKRHPIQESDLYLEAMMLENKELVLRILTVRENLAEGVLEFLPEMVLSQIKQSNGNHRRSLLERLTQVDSSSTDQTEPNPGESDTSEDSE.

The disordered stretch occupies residues 97 to 134 (SNGNHRRSLLERLTQVDSSSTDQTEPNPGESDTSEDSE). A compositionally biased stretch (polar residues) spans 111 to 122 (QVDSSSTDQTEP).

It belongs to the RbcX family. Homodimer (RbcX2). Interacts with the exposed C-terminal peptide of RbcL ('Glu-459-Asp-468'); binds 2 RbcL peptides per RbcX2, stapling them into an RbcL2 dimer. A slightly longer peptide binds with a higher affinity, but no long-term stable interaction with RbcL is detected. Contacts a second RbcL monomer via its peripheral polar surface.

It is found in the carboxysome. It localises to the cytoplasm. In terms of biological role, an RbcL-specific chaperone. Required for assembly of the RbcL8 core, acting downstream of the major chaperonin (GroEL-GroES). Acts on newly folded RbcL, has a transient dynamic interaction with RbcL and is eventually displaced by RbcS. The central cleft of the RbcX homodimer (RbcX2) binds the C-terminus of an RbcL monomer, stabilizing the C-terminus and probably preventing its reassociation with chaperonin GroEL-ES. At the same time the peripheral region of RbcX2 binds a second RbcL monomer, bridging the RbcL homodimers in the correct orientation. The RbcX2(2)-bound RbcL dimers then assemble into the RbcL8 core (RbcL8-(RbcX2)8). RbcS binding triggers the release of RbcX2. Required for optimal reconstitution of RuBisCO into its RbcL8S8 holoenzyme form upon expression of rbcL-rbcS subunits in E.coli, and probably also in situ. A frameshift mutation that replaces half the protein reduces accumulation of both RbcL and RbcS subunits and halves activity of RuBisCO in situ and in E.coli. The sequence is that of RuBisCO chaperone RbcX from Picosynechococcus sp. (strain ATCC 27264 / PCC 7002 / PR-6) (Agmenellum quadruplicatum).